The primary structure comprises 202 residues: T-cell surface glycoprotein CD3 epsilon chain (202 aa).

Residues 1–21 (MQSRNLWRILGLCLLSVGAWG) form the signal peptide. Over 22–122 (QDEDFKASDD…VCANCIEVNL (101 aa)) the chain is Extracellular. The Ig-like domain maps to 37–107 (PEKRFKVSIS…ADSIKEKSYL (71 aa)). An intrachain disulfide couples C54 to C96. The helical transmembrane segment at 123-143 (MAVVTIIVADICLTLGLLLMV) threads the bilayer. The Cytoplasmic segment spans residues 144–202 (YYWSKTRKANAKPVMRGTGAGSRPRGQNKEKPPPVPNPDYEPIRKGQQDLYSGLNQRGI). Residues 156-202 (PVMRGTGAGSRPRGQNKEKPPPVPNPDYEPIRKGQQDLYSGLNQRGI) are disordered. Positions 170 to 187 (QNKEKPPPVPNPDYEPIR) are NUMB-binding region. The ITAM domain maps to 173 to 200 (EKPPPVPNPDYEPIRKGQQDLYSGLNQR). Positions 174-181 (KPPPVPNP) are proline-rich sequence. 2 positions are modified to phosphotyrosine: Y183 and Y194. The segment covering 192–202 (DLYSGLNQRGI) has biased composition (polar residues).

As to quaternary structure, the TCR-CD3 complex is composed of a CD3D/CD3E and a CD3G/CD3E heterodimers that preferentially associate with TCRalpha and TCRbeta, respectively, to form TCRalpha/CD3E/CD3G and TCRbeta/CD3G/CD3E trimers. In turn, the hexamer interacts with CD3Z homodimer to form the TCR-CD3 complex. Alternatively, TCRalpha and TCRbeta can be replaced by TCRgamma and TCRdelta. Interacts with CD6. Interacts (via Proline-rich sequence) with NCK1; the interaction is ligand dependent but independent of tyrosine kinase activation. Post-translationally, phosphorylated on Tyr residues after T-cell receptor triggering by LCK in association with CD4/CD8.

It localises to the cell membrane. In terms of biological role, part of the TCR-CD3 complex present on T-lymphocyte cell surface that plays an essential role in adaptive immune response. When antigen presenting cells (APCs) activate T-cell receptor (TCR), TCR-mediated signals are transmitted across the cell membrane by the CD3 chains CD3D, CD3E, CD3G and CD3Z. All CD3 chains contain immunoreceptor tyrosine-based activation motifs (ITAMs) in their cytoplasmic domain. Upon TCR engagement, these motifs become phosphorylated by Src family protein tyrosine kinases LCK and FYN, resulting in the activation of downstream signaling pathways. In addition of this role of signal transduction in T-cell activation, CD3E plays an essential role in correct T-cell development. Also participates in internalization and cell surface down-regulation of TCR-CD3 complexes via endocytosis sequences present in CD3E cytosolic region. In addition to its role as a TCR coreceptor, it serves as a receptor for ITPRIPL1. Ligand recognition inhibits T-cell activation by promoting interaction with NCK1, which prevents CD3E-ZAP70 interaction and blocks the ERK-NFkB signaling cascade and calcium influx. The protein is T-cell surface glycoprotein CD3 epsilon chain (CD3E) of Canis lupus familiaris (Dog).